A 248-amino-acid chain; its full sequence is 14-3-3 protein sigma (248 aa).

3 positions are modified to phosphoserine: serine 5, serine 74, and serine 248.

It belongs to the 14-3-3 family. Homodimer. Interacts with KRT17 and SAMSN1. Found in a complex with XPO7, EIF4A1, ARHGAP1, VPS26A, VPS29 and VPS35. Interacts with GAB2. Interacts with SRPK2. Interacts with COPS6. Interacts with COP1; this interaction leads to proteasomal degradation. Interacts with the 'Thr-369' phosphorylated form of DAPK2. Interacts with PI4KB. Interacts with SLITRK1. Interacts with LRRK2; this interaction is dependent on LRRK2 phosphorylation. Interacts with PKP3 (via N-terminus); the interaction maintains the cytoplasmic pool of PKP3, facilitates PKP3 exchange at desmosomes and restricts PKP3 localization to existing desmosome cell junctions. Interacts with LCP2. In terms of processing, ubiquitinated. Ubiquitination by RFFL induces proteasomal degradation and indirectly regulates p53/TP53 activation. Expressed in dorsal skin (at protein level). Expressed in the basal layer of skin epithelium and in outer root sheath of hair follicle.

It localises to the cytoplasm. The protein localises to the nucleus. The protein resides in the secreted. Adapter protein implicated in the regulation of a large spectrum of both general and specialized signaling pathways. Binds to a large number of partners, usually by recognition of a phosphoserine or phosphothreonine motif. Binding generally results in the modulation of the activity of the binding partner. Promotes cytosolic retention of GBP1 GTPase by binding to phosphorylated GBP1, thereby inhibiting the innate immune response. Also acts as a TP53/p53-regulated inhibitor of G2/M progression. When bound to KRT17, regulates protein synthesis and epithelial cell growth by stimulating Akt/mTOR pathway. Acts to maintain desmosome cell junction adhesion in epithelial cells via interacting with and sequestering PKP3 to the cytoplasm, thereby restricting its translocation to existing desmosome structures and therefore maintaining desmosome protein homeostasis. Also acts to facilitate PKP3 exchange at desmosome plaques, thereby maintaining keratinocyte intercellular adhesion. May also regulate MDM2 autoubiquitination and degradation and thereby activate p53/TP53. This Mus musculus (Mouse) protein is 14-3-3 protein sigma (Sfn).